A 596-amino-acid polypeptide reads, in one-letter code: MKHIRNFSIIAHIDHGKSTLSDRLIQECGGLSDREMAAQVLDSMDIERERGITIKAQSVTLDYKALDGETYQLNFIDTPGHVDFSYEVSRSLAACEGALLVVDAGQGVEAQTLANCYTALEMDMDVVPVLNKIDLPQADPERVADEIEDIVGIEAADAVRCSAKTGIGIKDVLEVIVAQIPPPEGDTEGPLQALIIDSWFDSYLGVVSLVRIKNGILKKGDKFKVMSTGQTYNADRVGIFTPKQTDTAELKTGEVGFVIAGIKEIHGAPVGDTLTHAKHGAEKPLGGFKKVKPQVYAGVFPISTDDYESFRDALNKLSLNDASLFFEPETSSALGFGFRIGFLGLLHMEIIQERLEREYNLDLITTAPTVVYEIVKTSGDTIYVDNPSDLPAINNIAEMREPIVETNILVPKDYLGNVITLCVEKRGVQKNMVYHGNQVAITYELPMAEVVMDFFDRLKSTSRGYASLEYNFVRFEPADMVRLDILINGDRVDALAMIIHKGLIRTKGLALVNKMKELIPRQMFDIAVQAAVGSQIIARSSIKAMRKDVTAKCYGGDVSRKKKLLNKQKEGKKRMKSVGNVEVPQEAFLAVLKLND.

In terms of domain architecture, tr-type G spans 2–184; the sequence is KHIRNFSIIA…VIVAQIPPPE (183 aa). GTP contacts are provided by residues 14–19 and 131–134; these read DHGKST and NKID.

It belongs to the TRAFAC class translation factor GTPase superfamily. Classic translation factor GTPase family. LepA subfamily.

It localises to the cell inner membrane. It catalyses the reaction GTP + H2O = GDP + phosphate + H(+). In terms of biological role, required for accurate and efficient protein synthesis under certain stress conditions. May act as a fidelity factor of the translation reaction, by catalyzing a one-codon backward translocation of tRNAs on improperly translocated ribosomes. Back-translocation proceeds from a post-translocation (POST) complex to a pre-translocation (PRE) complex, thus giving elongation factor G a second chance to translocate the tRNAs correctly. Binds to ribosomes in a GTP-dependent manner. This Shewanella woodyi (strain ATCC 51908 / MS32) protein is Elongation factor 4.